Reading from the N-terminus, the 447-residue chain is Alpha-1,3-mannosyl-glycoprotein 2-beta-N-acetylglucosaminyltransferase (447 aa).

Residues 1–6 lie on the Cytoplasmic side of the membrane; it reads MLKKQS. A helical; Signal-anchor for type II membrane protein transmembrane segment spans residues 7-29; that stretch reads AGLVLWGAIIFVGWNALLLLFFW. Residues 30 to 447 lie on the Lumenal side of the membrane; that stretch reads TRPAPGRLPS…TWNGYDPSWN (418 aa). A disulfide bond links C115 and C145. Substrate is bound by residues R117, D144, H190, and D212. D213 provides a ligand contact to Mn(2+). Cysteines 239 and 305 form a disulfide. The active-site Proton acceptor is the D291. S322 is a binding site for substrate.

This sequence belongs to the glycosyltransferase 13 family. In terms of assembly, interacts with MGAT4D. Interacts with BRI3. It depends on Mn(2+) as a cofactor. In terms of tissue distribution, appears to be present in all tissues.

Its subcellular location is the golgi apparatus membrane. It localises to the cytoplasm. It is found in the perinuclear region. The enzyme catalyses N(4)-(alpha-D-Man-(1-&gt;3)-[alpha-D-Man-(1-&gt;3)-[alpha-D-Man-(1-&gt;6)]-alpha-D-Man-(1-&gt;6)]-beta-D-Man-(1-&gt;4)-beta-D-GlcNAc-(1-&gt;4)-beta-D-GlcNAc)-L-asparaginyl-[protein] (N-glucan mannose isomer 5A1,2) + UDP-N-acetyl-alpha-D-glucosamine = N(4)-{beta-D-GlcNAc-(1-&gt;2)-alpha-D-Man-(1-&gt;3)-[alpha-D-Man-(1-&gt;3)-[alpha-D-Man-(1-&gt;6)]-alpha-D-Man-(1-&gt;6)]-beta-D-Man-(1-&gt;4)-beta-D-GlcNAc-(1-&gt;4)-beta-D-GlcNAc}-L-asparaginyl-[protein] + UDP + H(+). Its pathway is protein modification; protein glycosylation. Functionally, initiates complex N-linked carbohydrate formation. Essential for the conversion of high-mannose to hybrid and complex N-glycans. In Rattus norvegicus (Rat), this protein is Alpha-1,3-mannosyl-glycoprotein 2-beta-N-acetylglucosaminyltransferase (Mgat1).